The following is a 214-amino-acid chain: Adenylate kinase (214 aa).

10–15 (GAGKGT) lines the ATP pocket. The segment at 30 to 59 (STGDMLRAAVKAGTELGKQAKEIMDAGKLV) is NMP. AMP contacts are provided by residues Thr-31, Arg-36, 57–59 (KLV), 85–88 (GFPR), and Gln-92. Residues 122–159 (GRRVHAASGRVYHVKFNPPKVEDKDDVTGEDLSVRKDD) form an LID region. ATP contacts are provided by residues Arg-123 and 132–133 (VY). Residues Arg-156 and Arg-167 each coordinate AMP. Arg-200 contacts ATP.

This sequence belongs to the adenylate kinase family. As to quaternary structure, monomer.

The protein localises to the cytoplasm. It catalyses the reaction AMP + ATP = 2 ADP. It participates in purine metabolism; AMP biosynthesis via salvage pathway; AMP from ADP: step 1/1. In terms of biological role, catalyzes the reversible transfer of the terminal phosphate group between ATP and AMP. Plays an important role in cellular energy homeostasis and in adenine nucleotide metabolism. The polypeptide is Adenylate kinase (Pectobacterium atrosepticum (strain SCRI 1043 / ATCC BAA-672) (Erwinia carotovora subsp. atroseptica)).